The sequence spans 222 residues: MLCIKKPSVASAFNELIPKILKDGEVVETEFEERTKEIRNTIIEITNPKLKKVPEKYPLGEKAVEEYTKNLLYGSKNVFSYDYHQRLFEYPYADEKINQIDYIIEKLNQQKNSRRAVAITWNPKIDIEVSRDERGSVPCLQLVQFLIRNGKLYQTVIFRSNDALLAFVSNAIGLITLGEYIAKKVGVGYGTYTHHAISMHIYVDRDFDYIKKYFPECLKYLW.

Cys-139 is a catalytic residue.

Belongs to the thymidylate synthase family. Archaeal-type ThyA subfamily. Monomer.

The protein resides in the cytoplasm. It functions in the pathway pyrimidine metabolism; dTTP biosynthesis. Its function is as follows. May catalyze the biosynthesis of dTMP using an unknown cosubstrate. In Methanocaldococcus jannaschii (strain ATCC 43067 / DSM 2661 / JAL-1 / JCM 10045 / NBRC 100440) (Methanococcus jannaschii), this protein is Putative thymidylate synthase.